The following is a 66-amino-acid chain: Large ribosomal subunit protein bL32 (66 aa).

Over residues M1–R18 the composition is skewed to basic residues. The tract at residues M1–D21 is disordered.

This sequence belongs to the bacterial ribosomal protein bL32 family.

In Mycoplasmopsis agalactiae (strain NCTC 10123 / CIP 59.7 / PG2) (Mycoplasma agalactiae), this protein is Large ribosomal subunit protein bL32.